The following is a 197-amino-acid chain: Lipid A acyltransferase PagP (197 aa).

Positions 1–24 (MMFFKRTILACTVALLFPALPSYA) are cleaved as a signal peptide. Residues His-69, Asp-112, and Ser-113 contribute to the active site.

The protein belongs to the lipid A palmitoyltransferase family. As to quaternary structure, homodimer.

The protein resides in the cell outer membrane. The enzyme catalyses a lipid A + a 1,2-diacyl-sn-glycero-3-phosphocholine = a hepta-acyl lipid A + a 2-acyl-sn-glycero-3-phosphocholine. The catalysed reaction is a lipid IVA + a 1,2-diacyl-sn-glycero-3-phosphocholine = a lipid IVB + a 2-acyl-sn-glycero-3-phosphocholine. It carries out the reaction a lipid IIA + a 1,2-diacyl-sn-glycero-3-phosphocholine = a lipid IIB + a 2-acyl-sn-glycero-3-phosphocholine. In terms of biological role, transfers a fatty acid residue from the sn-1 position of a phospholipid to the N-linked hydroxyfatty acid chain on the proximal unit of lipid A or its precursors. The polypeptide is Lipid A acyltransferase PagP (Serratia proteamaculans (strain 568)).